An 89-amino-acid polypeptide reads, in one-letter code: HssA/B-like protein 22 (89 aa).

The protein belongs to the hssA/B family.

This Dictyostelium discoideum (Social amoeba) protein is HssA/B-like protein 22 (hssl22).